A 365-amino-acid chain; its full sequence is tRNA/tmRNA (uracil-C(5))-methyltransferase (365 aa).

S-adenosyl-L-methionine-binding residues include glutamine 189, tyrosine 217, asparagine 222, glutamate 238, and aspartate 298. Cysteine 323 functions as the Nucleophile in the catalytic mechanism. Glutamate 357 serves as the catalytic Proton acceptor.

It belongs to the class I-like SAM-binding methyltransferase superfamily. RNA M5U methyltransferase family. TrmA subfamily.

It catalyses the reaction uridine(54) in tRNA + S-adenosyl-L-methionine = 5-methyluridine(54) in tRNA + S-adenosyl-L-homocysteine + H(+). The catalysed reaction is uridine(341) in tmRNA + S-adenosyl-L-methionine = 5-methyluridine(341) in tmRNA + S-adenosyl-L-homocysteine + H(+). Functionally, dual-specificity methyltransferase that catalyzes the formation of 5-methyluridine at position 54 (m5U54) in all tRNAs, and that of position 341 (m5U341) in tmRNA (transfer-mRNA). The chain is tRNA/tmRNA (uracil-C(5))-methyltransferase from Shewanella piezotolerans (strain WP3 / JCM 13877).